A 256-amino-acid chain; its full sequence is MFKKLKNKNKTETNHNNDLDIHNIPEHVAIIMDGNGRWAKKRKMPRIKGHYEGMQTIKKITREASDIGIKYLTLYAFSTENWSRPESEVNYIMNLPVNFLKTFLPELIEKNVKIETIGFYEGLPQSTIDAIDFAKAKTQHNTGLTLVFAINYGGRAEIIQSMKAIYNELQLNGQGSEVIDEALIKRHLMTHSYPDPDLLIRTSGEQRISNFLIWQASYSEFIFNEKLWPDFDEKELRECLKIYQSRQRRFGGLSEE.

D33 is a catalytic residue. D33 lines the Mg(2+) pocket. Residues 34–37, W38, R46, H50, and 78–80 contribute to the substrate site; these read GNGR and STE. Residue N81 is the Proton acceptor of the active site. Residues W82, R84, R201, and 207–209 contribute to the substrate site; that span reads RIS. Residue E220 participates in Mg(2+) binding.

Belongs to the UPP synthase family. As to quaternary structure, homodimer. Mg(2+) serves as cofactor.

In terms of biological role, catalyzes the condensation of isopentenyl diphosphate (IPP) with allylic pyrophosphates generating different type of terpenoids. The chain is Isoprenyl transferase from Staphylococcus epidermidis (strain ATCC 35984 / DSM 28319 / BCRC 17069 / CCUG 31568 / BM 3577 / RP62A).